The chain runs to 154 residues: Ribonuclease H (154 aa).

The 142-residue stretch at 1–142 folds into the RNase H type-1 domain; the sequence is MLKKIDLYTD…CDELAREAAS (142 aa). Residues Asp-10, Glu-48, Asp-70, and Asp-134 each coordinate Mg(2+). The interval 133 to 154 is disordered; the sequence is CDELAREAASGKQLAEDTGYQP.

It belongs to the RNase H family. In terms of assembly, monomer. Mg(2+) serves as cofactor.

The protein resides in the cytoplasm. It catalyses the reaction Endonucleolytic cleavage to 5'-phosphomonoester.. Functionally, endonuclease that specifically degrades the RNA of RNA-DNA hybrids. The sequence is that of Ribonuclease H from Aeromonas hydrophila subsp. hydrophila (strain ATCC 7966 / DSM 30187 / BCRC 13018 / CCUG 14551 / JCM 1027 / KCTC 2358 / NCIMB 9240 / NCTC 8049).